A 111-amino-acid chain; its full sequence is Glutaredoxin-C2 (111 aa).

The region spanning 3-103 (MQKAKEIVNS…PLLTEAGAIA (101 aa)) is the Glutaredoxin domain. Cys23 and Cys26 are joined by a disulfide.

It belongs to the glutaredoxin family. CPYC subfamily.

It localises to the cytoplasm. Its function is as follows. Has a glutathione-disulfide oxidoreductase activity in the presence of NADPH and glutathione reductase. Reduces low molecular weight disulfides and proteins. The polypeptide is Glutaredoxin-C2 (GRXC2) (Arabidopsis thaliana (Mouse-ear cress)).